We begin with the raw amino-acid sequence, 212 residues long: Cyclin-dependent kinase inhibitor 3 (212 aa).

The segment covering 1–12 has biased composition (polar residues); that stretch reads MKPPSSIQTSEF. Residues 1-23 are disordered; sequence MKPPSSIQTSEFDSSDEEPIEDE. Residues 1 to 34 form an interaction with CDK2 region; sequence MKPPSSIQTSEFDSSDEEPIEDEQTPIQISWLPL. Over residues 13–23 the composition is skewed to acidic residues; sequence DSSDEEPIEDE. A Tyrosine-protein phosphatase domain is found at 32–201; the sequence is LPLSRVNYSQ…FRDKLAAHLS (170 aa). The active-site Phosphocysteine intermediate is cysteine 140.

Belongs to the protein-tyrosine phosphatase family. Interacts with cyclin-dependent kinases such as CDK1, CDK2 and CDK3. Does not interact with CDK4. Interacts (via C-terminus) with phosphorylated CDK2 (via C-terminal helix). Interacts with MS4A3 (via C-terminus); the interaction enhances CDKN3 enzymatic activity.

Its subcellular location is the cytoplasm. It localises to the perinuclear region. The catalysed reaction is O-phospho-L-tyrosyl-[protein] + H2O = L-tyrosyl-[protein] + phosphate. The enzyme catalyses O-phospho-L-seryl-[protein] + H2O = L-seryl-[protein] + phosphate. It catalyses the reaction O-phospho-L-threonyl-[protein] + H2O = L-threonyl-[protein] + phosphate. Its function is as follows. May play a role in cell cycle regulation. Dual specificity phosphatase active toward substrates containing either phosphotyrosine or phosphoserine residues. Dephosphorylates CDK2 at 'Thr-160' in a cyclin-dependent manner. In Sus scrofa (Pig), this protein is Cyclin-dependent kinase inhibitor 3.